The primary structure comprises 690 residues: Phosphate acetyltransferase (690 aa).

A phosphate acetyltransferase region spans residues 365–690; it reads MFTYRLLQQA…TAIQAQGVHE (326 aa).

In the N-terminal section; belongs to the CobB/CobQ family. It in the C-terminal section; belongs to the phosphate acetyltransferase and butyryltransferase family.

The protein resides in the cytoplasm. The enzyme catalyses acetyl-CoA + phosphate = acetyl phosphate + CoA. The protein operates within metabolic intermediate biosynthesis; acetyl-CoA biosynthesis; acetyl-CoA from acetate: step 2/2. In terms of biological role, involved in acetate metabolism. This is Phosphate acetyltransferase (pta) from Mycobacterium tuberculosis (strain CDC 1551 / Oshkosh).